Reading from the N-terminus, the 239-residue chain is Aldehyde dehydrogenase, dimeric NADP-preferring (239 aa).

Cys-30 is a catalytic residue.

The protein belongs to the aldehyde dehydrogenase family. As to quaternary structure, homodimer.

It localises to the cytoplasm. It catalyses the reaction an aldehyde + NAD(+) + H2O = a carboxylate + NADH + 2 H(+). The catalysed reaction is octanal + NAD(+) + H2O = octanoate + NADH + 2 H(+). ALDHs play a major role in the detoxification of alcohol-derived acetaldehyde. They are involved in the metabolism of corticosteroids, biogenic amines, neurotransmitters, and lipid peroxidation. Oxidizes medium and long chain aldehydes into non-toxic fatty acids. Preferentially oxidizes aromatic aldehyde substrates. Comprises about 50 percent of corneal epithelial soluble proteins. May play a role in preventing corneal damage caused by ultraviolet light. This chain is Aldehyde dehydrogenase, dimeric NADP-preferring (ALDH3A1), found in Bos taurus (Bovine).